Reading from the N-terminus, the 505-residue chain is Maturase K (505 aa).

The protein belongs to the intron maturase 2 family. MatK subfamily.

The protein resides in the plastid. It localises to the chloroplast. Functionally, usually encoded in the trnK tRNA gene intron. Probably assists in splicing its own and other chloroplast group II introns. This Nuphar advena (Common spatterdock) protein is Maturase K.